Reading from the N-terminus, the 81-residue chain is Photosystem I iron-sulfur center (81 aa).

2 4Fe-4S ferredoxin-type domains span residues 2-31 and 39-68; these read AHIV…MVPW and MASA…VRVY. Positions 11, 14, 17, 21, 48, 51, 54, and 58 each coordinate [4Fe-4S] cluster.

In terms of assembly, the eukaryotic PSI reaction center is composed of at least 11 subunits. It depends on [4Fe-4S] cluster as a cofactor.

The protein resides in the plastid. It localises to the chloroplast thylakoid membrane. The enzyme catalyses reduced [plastocyanin] + hnu + oxidized [2Fe-2S]-[ferredoxin] = oxidized [plastocyanin] + reduced [2Fe-2S]-[ferredoxin]. Apoprotein for the two 4Fe-4S centers FA and FB of photosystem I (PSI); essential for photochemical activity. FB is the terminal electron acceptor of PSI, donating electrons to ferredoxin. The C-terminus interacts with PsaA/B/D and helps assemble the protein into the PSI complex. Required for binding of PsaD and PsaE to PSI. PSI is a plastocyanin/cytochrome c6-ferredoxin oxidoreductase, converting photonic excitation into a charge separation, which transfers an electron from the donor P700 chlorophyll pair to the spectroscopically characterized acceptors A0, A1, FX, FA and FB in turn. The sequence is that of Photosystem I iron-sulfur center from Chlamydomonas reinhardtii (Chlamydomonas smithii).